Reading from the N-terminus, the 505-residue chain is uncharacterized protein (505 aa).

Positions 1 to 22 (MAILKSALVGFICFLHFFIVNA) are cleaved as a signal peptide. Residues Asn-25 and Asn-114 are each glycosylated (N-linked (GlcNAc...) asparagine). A run of 5 helical transmembrane segments spans residues 181-201 (LFLN…WSFI), 216-236 (ISGV…YFYF), 266-286 (FLLL…GSLL), 291-311 (ILAG…FISP), and 318-338 (VILF…LWIV). The N-linked (GlcNAc...) asparagine glycan is linked to Asn-342. 2 helical membrane-spanning segments follow: residues 365-385 (IVIC…AILI) and 400-420 (LLWF…MLTI). N-linked (GlcNAc...) asparagine glycosylation occurs at Asn-454.

This sequence belongs to the LU7TM family.

It is found in the membrane. This is an uncharacterized protein from Schizosaccharomyces pombe (strain 972 / ATCC 24843) (Fission yeast).